We begin with the raw amino-acid sequence, 330 residues long: Tryptophan--tRNA ligase (330 aa).

ATP-binding positions include 10–12 and 18–19; these read QAT and GN. A 'HIGH' region motif is present at residues 11–19; the sequence is ATGSLHLGN. L-tryptophan is bound at residue Asp134. ATP contacts are provided by residues 146–148, Ile186, and 195–199; these read GED and KMSKS. Residues 195 to 199 carry the 'KMSKS' region motif; that stretch reads KMSKS.

Belongs to the class-I aminoacyl-tRNA synthetase family. Homodimer.

It is found in the cytoplasm. The catalysed reaction is tRNA(Trp) + L-tryptophan + ATP = L-tryptophyl-tRNA(Trp) + AMP + diphosphate + H(+). Its function is as follows. Catalyzes the attachment of tryptophan to tRNA(Trp). The polypeptide is Tryptophan--tRNA ligase (Rickettsia felis (strain ATCC VR-1525 / URRWXCal2) (Rickettsia azadi)).